The primary structure comprises 490 residues: Betaine aldehyde dehydrogenase (490 aa).

3 residues coordinate K(+): Thr26, Ile27, and Asp93. Residue 150 to 152 (GAW) participates in NAD(+) binding. Residue Lys162 is the Charge relay system of the active site. An NAD(+)-binding site is contributed by 176–179 (KPSE). Residue Val180 coordinates K(+). An NAD(+)-binding site is contributed by 230–233 (GTST). Residue Leu246 participates in K(+) binding. Glu252 (proton acceptor) is an active-site residue. Residues Gly254, Cys286, and Glu387 each contribute to the NAD(+) site. Cys286 acts as the Nucleophile in catalysis. At Cys286 the chain carries Cysteine sulfenic acid (-SOH). Residues Lys457 and Gly460 each coordinate K(+). Glu464 functions as the Charge relay system in the catalytic mechanism.

The protein belongs to the aldehyde dehydrogenase family. As to quaternary structure, dimer of dimers. K(+) is required as a cofactor.

It catalyses the reaction betaine aldehyde + NAD(+) + H2O = glycine betaine + NADH + 2 H(+). Its pathway is amine and polyamine biosynthesis; betaine biosynthesis via choline pathway; betaine from betaine aldehyde: step 1/1. Functionally, involved in the biosynthesis of the osmoprotectant glycine betaine. Catalyzes the irreversible oxidation of betaine aldehyde to the corresponding acid. This is Betaine aldehyde dehydrogenase from Pseudomonas aeruginosa (strain UCBPP-PA14).